The primary structure comprises 129 residues: Large ribosomal subunit protein bL12 (129 aa).

The disordered stretch occupies residues 94-113 (TEGLPKTVKEKTSKSDAEDT).

The protein belongs to the bacterial ribosomal protein bL12 family. In terms of assembly, homodimer. Part of the ribosomal stalk of the 50S ribosomal subunit. Forms a multimeric L10(L12)X complex, where L10 forms an elongated spine to which 2 to 4 L12 dimers bind in a sequential fashion. Binds GTP-bound translation factors.

In terms of biological role, forms part of the ribosomal stalk which helps the ribosome interact with GTP-bound translation factors. Is thus essential for accurate translation. This chain is Large ribosomal subunit protein bL12, found in Chlamydia pneumoniae (Chlamydophila pneumoniae).